Here is a 164-residue protein sequence, read N- to C-terminus: 3-isopropylmalate dehydratase small subunit 1 (164 aa).

It belongs to the LeuD family. LeuD type 2 subfamily. Heterodimer of LeuC and LeuD.

It carries out the reaction (2R,3S)-3-isopropylmalate = (2S)-2-isopropylmalate. The protein operates within amino-acid biosynthesis; L-leucine biosynthesis; L-leucine from 3-methyl-2-oxobutanoate: step 2/4. Catalyzes the isomerization between 2-isopropylmalate and 3-isopropylmalate, via the formation of 2-isopropylmaleate. This chain is 3-isopropylmalate dehydratase small subunit 1 (leuD1), found in Pyrococcus furiosus (strain ATCC 43587 / DSM 3638 / JCM 8422 / Vc1).